The chain runs to 713 residues: Polyribonucleotide nucleotidyltransferase (713 aa).

The Mg(2+) site is built by Asp495 and Asp501. One can recognise a KH domain in the interval Pro562–Ile621. The region spanning Asp631 to Arg700 is the S1 motif domain.

The protein belongs to the polyribonucleotide nucleotidyltransferase family. Mg(2+) serves as cofactor.

Its subcellular location is the cytoplasm. It carries out the reaction RNA(n+1) + phosphate = RNA(n) + a ribonucleoside 5'-diphosphate. Functionally, involved in mRNA degradation. Catalyzes the phosphorolysis of single-stranded polyribonucleotides processively in the 3'- to 5'-direction. In Gloeobacter violaceus (strain ATCC 29082 / PCC 7421), this protein is Polyribonucleotide nucleotidyltransferase.